A 204-amino-acid polypeptide reads, in one-letter code: ADP-ribosylation factor-like protein 15 (204 aa).

GTP contacts are provided by residues 39–46, 82–86, and 142–145; these read GLTGSGKT, ELGGA, and NHQD.

It belongs to the small GTPase superfamily. Arf family.

This Pongo abelii (Sumatran orangutan) protein is ADP-ribosylation factor-like protein 15 (ARL15).